A 370-amino-acid chain; its full sequence is Chaperone protein DnaJ (370 aa).

The region spanning 6 to 70 (DYYEVLGVQR…EKRSMYDRFG (65 aa)) is the J domain. The CR-type zinc finger occupies 128-208 (GVEKTIEFRR…CRGEGRVRQT (81 aa)). Zn(2+)-binding residues include cysteine 141, cysteine 144, cysteine 158, cysteine 161, cysteine 182, cysteine 185, cysteine 196, and cysteine 199. CXXCXGXG motif repeat units lie at residues 141–148 (CPACRGSG), 158–165 (CPKCGGLG), 182–189 (CDMCRGEG), and 196–203 (CRECRGEG).

It belongs to the DnaJ family. As to quaternary structure, homodimer. Zn(2+) is required as a cofactor.

The protein resides in the cytoplasm. Participates actively in the response to hyperosmotic and heat shock by preventing the aggregation of stress-denatured proteins and by disaggregating proteins, also in an autonomous, DnaK-independent fashion. Unfolded proteins bind initially to DnaJ; upon interaction with the DnaJ-bound protein, DnaK hydrolyzes its bound ATP, resulting in the formation of a stable complex. GrpE releases ADP from DnaK; ATP binding to DnaK triggers the release of the substrate protein, thus completing the reaction cycle. Several rounds of ATP-dependent interactions between DnaJ, DnaK and GrpE are required for fully efficient folding. Also involved, together with DnaK and GrpE, in the DNA replication of plasmids through activation of initiation proteins. This Roseiflexus sp. (strain RS-1) protein is Chaperone protein DnaJ.